The primary structure comprises 147 residues: Hemoglobin subunit beta (147 aa).

At Val-2 the chain carries N-acetylvaline. In terms of domain architecture, Globin spans His-3–His-147. Thr-13 bears the Phosphothreonine mark. Position 45 is a phosphoserine (Ser-45). Lys-60 is modified (N6-acetyllysine). Residue His-64 participates in heme b binding. An N6-acetyllysine modification is found at Lys-83. His-93 is a binding site for heme b. The residue at position 94 (Cys-94) is an S-nitrosocysteine. Lys-145 bears the N6-acetyllysine mark.

Belongs to the globin family. Heterotetramer of two alpha chains and two beta chains. In terms of tissue distribution, red blood cells.

Involved in oxygen transport from the lung to the various peripheral tissues. This is Hemoglobin subunit beta (HBB) from Lagothrix lagotricha (Brown woolly monkey).